The following is a 151-amino-acid chain: Small ribosomal subunit protein uS15 (151 aa).

The protein belongs to the universal ribosomal protein uS15 family.

This chain is Small ribosomal subunit protein uS15 (RPS13), found in Glycine max (Soybean).